A 387-amino-acid chain; its full sequence is S-adenosylmethionine synthase (387 aa).

Residue histidine 16 participates in ATP binding. Aspartate 18 is a Mg(2+) binding site. Glutamate 44 provides a ligand contact to K(+). L-methionine is bound by residues glutamate 57 and glutamine 100. The interval glutamine 100 to arginine 110 is flexible loop. ATP is bound by residues aspartate 167–lysine 169, arginine 232–phenylalanine 233, aspartate 241, arginine 247–lysine 248, alanine 264, and lysine 268. An L-methionine-binding site is contributed by aspartate 241. Residue lysine 272 participates in L-methionine binding.

It belongs to the AdoMet synthase family. As to quaternary structure, homotetramer; dimer of dimers. It depends on Mg(2+) as a cofactor. Requires K(+) as cofactor.

Its subcellular location is the cytoplasm. The catalysed reaction is L-methionine + ATP + H2O = S-adenosyl-L-methionine + phosphate + diphosphate. The protein operates within amino-acid biosynthesis; S-adenosyl-L-methionine biosynthesis; S-adenosyl-L-methionine from L-methionine: step 1/1. Functionally, catalyzes the formation of S-adenosylmethionine (AdoMet) from methionine and ATP. The overall synthetic reaction is composed of two sequential steps, AdoMet formation and the subsequent tripolyphosphate hydrolysis which occurs prior to release of AdoMet from the enzyme. The sequence is that of S-adenosylmethionine synthase from Cupriavidus necator (strain ATCC 17699 / DSM 428 / KCTC 22496 / NCIMB 10442 / H16 / Stanier 337) (Ralstonia eutropha).